The primary structure comprises 306 residues: Ribosomal RNA small subunit methyltransferase A (306 aa).

Positions 37, 39, 64, 85, 115, and 134 each coordinate S-adenosyl-L-methionine.

This sequence belongs to the class I-like SAM-binding methyltransferase superfamily. rRNA adenine N(6)-methyltransferase family. RsmA subfamily.

It localises to the cytoplasm. It carries out the reaction adenosine(1518)/adenosine(1519) in 16S rRNA + 4 S-adenosyl-L-methionine = N(6)-dimethyladenosine(1518)/N(6)-dimethyladenosine(1519) in 16S rRNA + 4 S-adenosyl-L-homocysteine + 4 H(+). Functionally, specifically dimethylates two adjacent adenosines (A1518 and A1519) in the loop of a conserved hairpin near the 3'-end of 16S rRNA in the 30S particle. May play a critical role in biogenesis of 30S subunits. In Mycobacterium leprae (strain Br4923), this protein is Ribosomal RNA small subunit methyltransferase A.